The sequence spans 316 residues: Tetrahydromethanopterin S-methyltransferase subunit H (316 aa).

The protein belongs to the MtrH family. The complex is composed of 8 subunits; MtrA, MtrB, MtrC, MtrD, MtrE, MtrF, MtrG and MtrH.

The enzyme catalyses 5-methyl-5,6,7,8-tetrahydromethanopterin + coenzyme M + 2 Na(+)(in) = 5,6,7,8-tetrahydromethanopterin + methyl-coenzyme M + 2 Na(+)(out). The protein operates within one-carbon metabolism; methanogenesis from CO(2); methyl-coenzyme M from 5,10-methylene-5,6,7,8-tetrahydromethanopterin: step 2/2. Its function is as follows. Part of a complex that catalyzes the formation of methyl-coenzyme M and tetrahydromethanopterin from coenzyme M and methyl-tetrahydromethanopterin. This is an energy-conserving, sodium-ion translocating step. MtrH catalyzes the transfer of the methyl group from methyl-tetrahydromethanopterin to the corrinoid prosthetic group of MtrA. The chain is Tetrahydromethanopterin S-methyltransferase subunit H from Methanosarcina acetivorans (strain ATCC 35395 / DSM 2834 / JCM 12185 / C2A).